Reading from the N-terminus, the 291-residue chain is Lys-63-specific deubiquitinase BRCC36 (291 aa).

An N-acetylalanine modification is found at alanine 2. The region spanning 12–179 (VHLESDAFLV…YTCFQSIQAQ (168 aa)) is the MPN domain. Histidine 122, histidine 124, and aspartate 135 together coordinate Zn(2+). The JAMM motif motif lies at 122-135 (HSHPHITVWPSHVD). Position 233 is a phosphoserine (serine 233).

This sequence belongs to the peptidase M67A family. BRCC36 subfamily. Component of the ARISC complex, at least composed of UIMC1/RAP80, ABRAXAS1, BRCC3/BRCC36, BABAM2 and BABAM1/NBA1. Component of the BRCA1-A complex, at least composed of BRCA1, BARD1, UIMC1/RAP80, ABRAXAS1, BRCC3/BRCC36, BABAM2 and BABAM1/NBA1. In the BRCA1-A complex, interacts directly with ABRAXAS1 and BABAM2. Component of the BRISC complex, at least composed of ABRAXAS2, BRCC3/BRCC36, BABAM2 and BABAM1/NBA1. Identified in a complex with SHMT2 and the other subunits of the BRISC complex. In the BRISC complex, interacts directly with ABRAXAS2. Identified in a complex with ABRAXAS2 and NUMA1. The BRISC complex interacts with the CSN complex. Component of the BRCA1/BRCA2 containing complex (BRCC), which also contains BRCA1, BRCA2, BARD1, BABAM2 and RAD51. BRCC is a ubiquitin E3 ligase complex that enhances cellular survival following DNA damage. Interacts with BRCA1. Binds polyubiquitin. Interacts with PWWP2B. Interacts with HDAC1; this interaction is enhanced in the presence of PWWP2B. Zn(2+) serves as cofactor.

The protein resides in the nucleus. The protein localises to the cytoplasm. Its subcellular location is the cytoskeleton. It is found in the spindle pole. Metalloprotease that specifically cleaves 'Lys-63'-linked polyubiquitin chains. Does not have activity toward 'Lys-48'-linked polyubiquitin chains. Component of the BRCA1-A complex, a complex that specifically recognizes 'Lys-63'-linked ubiquitinated histones H2A and H2AX at DNA lesions sites, leading to target the BRCA1-BARD1 heterodimer to sites of DNA damage at double-strand breaks (DSBs). In the BRCA1-A complex, it specifically removes 'Lys-63'-linked ubiquitin on histones H2A and H2AX, antagonizing the RNF8-dependent ubiquitination at double-strand breaks (DSBs). Catalytic subunit of the BRISC complex, a multiprotein complex that specifically cleaves 'Lys-63'-linked ubiquitin in various substrates. Mediates the specific 'Lys-63'-specific deubiquitination associated with the COP9 signalosome complex (CSN), via the interaction of the BRISC complex with the CSN complex. The BRISC complex is required for normal mitotic spindle assembly and microtubule attachment to kinetochores via its role in deubiquitinating NUMA1. Plays a role in interferon signaling via its role in the deubiquitination of the interferon receptor IFNAR1; deubiquitination increases IFNAR1 activity by enhancing its stability and cell surface expression. Acts as a regulator of the NLRP3 inflammasome by mediating deubiquitination of NLRP3, leading to NLRP3 inflammasome assembly. Down-regulates the response to bacterial lipopolysaccharide (LPS) via its role in IFNAR1 deubiquitination. Deubiquitinates HDAC1 and PWWP2B leading to their stabilization. The sequence is that of Lys-63-specific deubiquitinase BRCC36 (Brcc3) from Mus musculus (Mouse).